The chain runs to 182 residues: Adenine phosphoribosyltransferase (182 aa).

This sequence belongs to the purine/pyrimidine phosphoribosyltransferase family. As to quaternary structure, homodimer.

It is found in the cytoplasm. It catalyses the reaction AMP + diphosphate = 5-phospho-alpha-D-ribose 1-diphosphate + adenine. The protein operates within purine metabolism; AMP biosynthesis via salvage pathway; AMP from adenine: step 1/1. Functionally, catalyzes a salvage reaction resulting in the formation of AMP, that is energically less costly than de novo synthesis. The sequence is that of Adenine phosphoribosyltransferase from Stutzerimonas stutzeri (Pseudomonas stutzeri).